Reading from the N-terminus, the 256-residue chain is tRNA (guanine-N(7)-)-methyltransferase (256 aa).

A compositionally biased stretch (polar residues) spans 1-11 (MHPQDASTEQT). Residues 1–35 (MHPQDASTEQTPVDDDQVESSQPVHAPEDVAHPRR) are disordered. Positions 85, 110, 137, and 160 each coordinate S-adenosyl-L-methionine. D160 is a catalytic residue. K164 provides a ligand contact to substrate. The tract at residues 166 to 171 (RHNKRR) is interaction with RNA. Residues D196 and 234-237 (TKFE) contribute to the substrate site.

This sequence belongs to the class I-like SAM-binding methyltransferase superfamily. TrmB family.

It carries out the reaction guanosine(46) in tRNA + S-adenosyl-L-methionine = N(7)-methylguanosine(46) in tRNA + S-adenosyl-L-homocysteine. It participates in tRNA modification; N(7)-methylguanine-tRNA biosynthesis. In terms of biological role, catalyzes the formation of N(7)-methylguanine at position 46 (m7G46) in tRNA. The protein is tRNA (guanine-N(7)-)-methyltransferase of Cupriavidus pinatubonensis (strain JMP 134 / LMG 1197) (Cupriavidus necator (strain JMP 134)).